The sequence spans 148 residues: uncharacterized protein (148 aa).

Residues 65–79 are compositionally biased toward low complexity; sequence VDSTPSVDSTGSTSD. The interval 65-85 is disordered; it reads VDSTPSVDSTGSTSDVVDDRG.

This is an uncharacterized protein from Saccharomyces cerevisiae (strain ATCC 204508 / S288c) (Baker's yeast).